The following is a 153-amino-acid chain: 3-hydroxyacyl-[acyl-carrier-protein] dehydratase FabZ (153 aa).

The active site involves histidine 56.

The protein belongs to the thioester dehydratase family. FabZ subfamily.

The protein resides in the cytoplasm. It catalyses the reaction a (3R)-hydroxyacyl-[ACP] = a (2E)-enoyl-[ACP] + H2O. In terms of biological role, involved in unsaturated fatty acids biosynthesis. Catalyzes the dehydration of short chain beta-hydroxyacyl-ACPs and long chain saturated and unsaturated beta-hydroxyacyl-ACPs. The chain is 3-hydroxyacyl-[acyl-carrier-protein] dehydratase FabZ from Nitrosomonas europaea (strain ATCC 19718 / CIP 103999 / KCTC 2705 / NBRC 14298).